We begin with the raw amino-acid sequence, 448 residues long: uncharacterized protein (448 aa).

The 152-residue stretch at Q4–L155 folds into the uDENN domain. The cDENN domain maps to L183–F326. The dDENN domain occupies G328 to R428. The helical transmembrane segment at F425–L447 threads the bilayer.

Its subcellular location is the golgi apparatus membrane. It localises to the endoplasmic reticulum membrane. This is an uncharacterized protein from Schizosaccharomyces pombe (strain 972 / ATCC 24843) (Fission yeast).